The primary structure comprises 262 residues: Acyl-[acyl-carrier-protein]--UDP-N-acetylglucosamine O-acyltransferase (262 aa).

This sequence belongs to the transferase hexapeptide repeat family. LpxA subfamily. In terms of assembly, homotrimer.

The protein resides in the cytoplasm. It carries out the reaction a (3R)-hydroxyacyl-[ACP] + UDP-N-acetyl-alpha-D-glucosamine = a UDP-3-O-[(3R)-3-hydroxyacyl]-N-acetyl-alpha-D-glucosamine + holo-[ACP]. It functions in the pathway glycolipid biosynthesis; lipid IV(A) biosynthesis; lipid IV(A) from (3R)-3-hydroxytetradecanoyl-[acyl-carrier-protein] and UDP-N-acetyl-alpha-D-glucosamine: step 1/6. Involved in the biosynthesis of lipid A, a phosphorylated glycolipid that anchors the lipopolysaccharide to the outer membrane of the cell. The protein is Acyl-[acyl-carrier-protein]--UDP-N-acetylglucosamine O-acyltransferase of Janthinobacterium sp. (strain Marseille) (Minibacterium massiliensis).